Here is a 613-residue protein sequence, read N- to C-terminus: MPKYRSATTTHGRNMAGARALWRATGVKDEDFGKPIIAVVNSFTQFVPGHVHLKDMGQLVAGEIEKAGGIAKEFNTIAVDDGIAMGHGGMLYSLPSRELIADSVEYMVNAHCADAMVCISNCDKITPGMLMAALRLNIPVIFVSGGPMEAGKTKLSDQILKLDLVDAMIQGADPTVSDEQSEQIERSACPTCGSCSGMFTANSMNCLTEALGLSQPGNGSMLATHADREQLFINAGKRIVDLTKRYYLNDDDTALPRNIANKKAFENAMALDIAMGGSTNTVLHLLAAAKEGDIDFDMDDIDRMSRLIPHLCKVAPSTPKYHMEDVHRAGGVYSILGELDRAGLLHNDTHNILGQTFAESLAEYDIAVTESQAVKDFFRAGPAGIRTTKAFSQSCRWDTLDDDRTNGCIRSKEHAFSQDGGLAVLSGNIAIKGCIVKTAGVDENSLVFSGPAVVFESQDTAVEGILGGKVKSGDVVVIRYEGPKGGPGMQEMLYPTTYLKSIGLGKECALITDGRFSGGTSGLSIGHVSPEAAAGGTIGLVNDGDIINIDIPNRSIELHVDDTELAQRRATADQQGWKPVNRQREVSYALRAYALLATSADQGAIRDKSKLEG.

Residue D81 participates in Mg(2+) binding. C122 lines the [2Fe-2S] cluster pocket. D123 and K124 together coordinate Mg(2+). K124 is modified (N6-carboxylysine). Residue C195 coordinates [2Fe-2S] cluster. E491 lines the Mg(2+) pocket. S517 functions as the Proton acceptor in the catalytic mechanism.

It belongs to the IlvD/Edd family. Homodimer. The cofactor is [2Fe-2S] cluster. Mg(2+) serves as cofactor.

It carries out the reaction (2R)-2,3-dihydroxy-3-methylbutanoate = 3-methyl-2-oxobutanoate + H2O. The enzyme catalyses (2R,3R)-2,3-dihydroxy-3-methylpentanoate = (S)-3-methyl-2-oxopentanoate + H2O. The protein operates within amino-acid biosynthesis; L-isoleucine biosynthesis; L-isoleucine from 2-oxobutanoate: step 3/4. It functions in the pathway amino-acid biosynthesis; L-valine biosynthesis; L-valine from pyruvate: step 3/4. Functionally, functions in the biosynthesis of branched-chain amino acids. Catalyzes the dehydration of (2R,3R)-2,3-dihydroxy-3-methylpentanoate (2,3-dihydroxy-3-methylvalerate) into 2-oxo-3-methylpentanoate (2-oxo-3-methylvalerate) and of (2R)-2,3-dihydroxy-3-methylbutanoate (2,3-dihydroxyisovalerate) into 2-oxo-3-methylbutanoate (2-oxoisovalerate), the penultimate precursor to L-isoleucine and L-valine, respectively. In Photobacterium profundum (strain SS9), this protein is Dihydroxy-acid dehydratase.